A 295-amino-acid polypeptide reads, in one-letter code: Chromatin modification-related protein YNG2 (295 aa).

Residues 151 to 208 (NGTAGSGSSSGRKRPASSSSANGKGQKRKQQKKERSRSHQRAGTVSRDVSPNAGIGRD) are disordered. Positions 156–171 (SGSSSGRKRPASSSSA) are enriched in low complexity. Residues 175–190 (GQKRKQQKKERSRSHQ) are compositionally biased toward basic residues. The segment at 233–282 (QLYCFCQRVSYGEMVACDGPNCKYEWFHYSCVNLTEPPKGQWYCPECRLE) adopts a PHD-type zinc-finger fold. Residues C236, C238, C249, C254, H260, C263, C276, and C279 each coordinate Zn(2+).

Belongs to the ING family. Interacts with H3K4me3 and to a lesser extent with H3K4me2. Component of the NuA4 histone acetyltransferase complex.

The protein resides in the nucleus. In terms of biological role, component of the NuA4 histone acetyltransferase complex which is involved in transcriptional activation of selected genes principally by acetylation of nucleosomal histone H4 and H2A. The NuA4 complex is also involved in DNA repair. Involved in cell cycle progression and meiosis. This Kluyveromyces lactis (strain ATCC 8585 / CBS 2359 / DSM 70799 / NBRC 1267 / NRRL Y-1140 / WM37) (Yeast) protein is Chromatin modification-related protein YNG2 (YNG2).